Reading from the N-terminus, the 221-residue chain is MATVHYSRRPGTPPVTLTSSPGMDDVATPIPYLPTYAEAVADAPPPYRSRESLVFSPPLFPHVENGTTQQSYDCLDCAYDGIHRLQLAFLRIRKCCVPAFLILFGILTLTAVVVAIVAVFPEEPPNSTTRNYCPEGEGIYSRLQLVARVCTTKAIYVTKANVAIWSTTPSTLHNLSICIFSCADAFLRDRGLGTSTSGIRTAGGLARTTSGDALFCISSVC.

The segment at 1–22 is disordered; that stretch reads MATVHYSRRPGTPPVTLTSSPG. A PPXY motif motif is present at residues 44-47; sequence PPPY. Residues 100–120 traverse the membrane as a helical segment; sequence FLILFGILTLTAVVVAIVAVF.

The protein belongs to the varicellovirus ORF0 protein family. As to quaternary structure, interacts with host ITCH; this interaction probably mediates ITCH degradation.

It localises to the host Golgi apparatus membrane. This Homo sapiens (Human) protein is Membrane protein 0.